The chain runs to 531 residues: Cytosolic Fe-S cluster assembly factor NAR1 (531 aa).

6 residues coordinate [4Fe-4S] cluster: cysteine 20, cysteine 72, cysteine 75, cysteine 78, cysteine 184, and cysteine 239. The disordered stretch occupies residues 395-426; sequence TSSTTTTKTNPLVARRKARLSSKRSESGAQDV. Residues cysteine 442 and cysteine 446 each contribute to the [4Fe-4S] cluster site.

Belongs to the NARF family.

In terms of biological role, component of the cytosolic Fe/S protein assembly machinery. Required for maturation of extramitochondrial Fe/S proteins. May play a role in the transfer of pre-assembled Fe/S clusters to target apoproteins. In Meyerozyma guilliermondii (strain ATCC 6260 / CBS 566 / DSM 6381 / JCM 1539 / NBRC 10279 / NRRL Y-324) (Yeast), this protein is Cytosolic Fe-S cluster assembly factor NAR1 (NAR1).